The chain runs to 874 residues: Alanine--tRNA ligase (874 aa).

Zn(2+) contacts are provided by histidine 562, histidine 566, cysteine 664, and histidine 668.

This sequence belongs to the class-II aminoacyl-tRNA synthetase family. Zn(2+) is required as a cofactor.

It localises to the cytoplasm. The catalysed reaction is tRNA(Ala) + L-alanine + ATP = L-alanyl-tRNA(Ala) + AMP + diphosphate. In terms of biological role, catalyzes the attachment of alanine to tRNA(Ala) in a two-step reaction: alanine is first activated by ATP to form Ala-AMP and then transferred to the acceptor end of tRNA(Ala). Also edits incorrectly charged Ser-tRNA(Ala) and Gly-tRNA(Ala) via its editing domain. The polypeptide is Alanine--tRNA ligase (Neisseria gonorrhoeae (strain ATCC 700825 / FA 1090)).